Consider the following 381-residue polypeptide: Succinyl-diaminopimelate desuccinylase (381 aa).

A Zn(2+)-binding site is contributed by H69. Residue D71 is part of the active site. Zn(2+) is bound at residue D103. The active-site Proton acceptor is E137. E138, E166, and H355 together coordinate Zn(2+).

The protein belongs to the peptidase M20A family. DapE subfamily. Homodimer. Zn(2+) is required as a cofactor. Co(2+) serves as cofactor.

It carries out the reaction N-succinyl-(2S,6S)-2,6-diaminopimelate + H2O = (2S,6S)-2,6-diaminopimelate + succinate. It functions in the pathway amino-acid biosynthesis; L-lysine biosynthesis via DAP pathway; LL-2,6-diaminopimelate from (S)-tetrahydrodipicolinate (succinylase route): step 3/3. Its function is as follows. Catalyzes the hydrolysis of N-succinyl-L,L-diaminopimelic acid (SDAP), forming succinate and LL-2,6-diaminopimelate (DAP), an intermediate involved in the bacterial biosynthesis of lysine and meso-diaminopimelic acid, an essential component of bacterial cell walls. This Rickettsia africae (strain ESF-5) protein is Succinyl-diaminopimelate desuccinylase.